Here is a 328-residue protein sequence, read N- to C-terminus: Type II secretion system protein K (328 aa).

A propeptide spans 1 to 7 (MRSRQRG) (leader sequence). The helical transmembrane segment at 8-28 (AALLVVLLILALMVTIAAVIT) threads the bilayer. Over 29-328 (ERTGKAFLRT…QYGGYRTVNP (300 aa)) the chain is Periplasmic.

This sequence belongs to the GSP K family. In terms of assembly, type II secretion is composed of four main components: the outer membrane complex, the inner membrane complex, the cytoplasmic secretion ATPase and the periplasm-spanning pseudopilus. Interacts with core component OutG. In terms of processing, cleaved by prepilin peptidase.

The protein localises to the cell inner membrane. Functionally, component of the type II secretion system required for the energy-dependent secretion of extracellular factors such as proteases and toxins from the periplasm. Plays a role in pseudopilus assembly and seems to control its length. Interacts with the pseudopilus tip complex that is critical for the recognition and binding of secretion substrates. The sequence is that of Type II secretion system protein K (outK) from Pectobacterium carotovorum subsp. carotovorum (Erwinia carotovora subsp. carotovora).